Here is a 945-residue protein sequence, read N- to C-terminus: MKRFTVCCFSNKIHKNGDRNPDKKSRESMEVSRKDNEEPEKQNNNNVASIIGSDRTNVIVNHDFSSGMHSWHPNCCEAFVVTAESNVSHGVLDPSKCGSYVVVKNRKETWQGLEQDITNRVKPCSLYKVSATVAVSGPVHGLVEVMATLKLESQQSQTNYQFIAKTCVFKEKWVRLEGMFSLPSLPEKVVFYLEGPSPGIDLLIQSVTIHRESEPELERVTAEDETIVVNPNFEDGLNNWSGRSCKIVLHDSMADGKIVPESGKVFASATERTQNWNGIQQEITGKVQRKRVYEATAVVRIYGNNVTTATVQATLWVQNPNQRDQYIGISTVQATDKEWIHLKGKFLLNGSASRVVIYIEGPPPGTDILLNSLTVKHAEKIPPSPPPSIENPAFGVNILTNSHLSDDTTNGWFSLGNCTLSVAEGSPRILPPMARDSLGAHERLSGRYILVTNRTQTWMGPAQMITDKLKLFLTYQISVWVKVGSGINSPQNVNVALGIDSQWVNGGQVEINDDRWHEIGGSFRIEKNPSKALVYVQGPSSGIDLMVAGLQIFPVDRLARIKHLKRQCDKIRKRDVILKFAGVDSSKFSGASVRVRQIRNSFPVGTCISRSNIDNEDFVDFFLKNFNWAVFANELKWYWTEPEQGKLNYQDADDMLNLCSSNNIETRGHCIFWEVQATVQQWIQNMNQTDLNNAVQNRLTDLLNRYKGKFKHYDVNNEMLHGSFYQDKLGKDIRVNMFKTAHQLDPSATLFVNDYHIEDGCDPKSCPEKYTEQILDLQEKGAPVGGIGIQGHIDSPVGPIVCSALDKLGILGLPIWFTELDVSSVNEHIRADDLEVMMWEAFGHPAVEGIMLWGFWELFMSRDNSHLVNAEGDVNEAGKRFLAVKKDWLSHANGHIDQNGAFPFRGYSGNYAVEVITTSSSKVLKTFGVDKEDSSQVITVDLQGL.

Residues 16–41 are compositionally biased toward basic and acidic residues; the sequence is NGDRNPDKKSRESMEVSRKDNEEPEK. The disordered stretch occupies residues 16–50; the sequence is NGDRNPDKKSRESMEVSRKDNEEPEKQNNNNVASI. 3 consecutive CBM-cenC domains span residues 57–197, 227–362, and 397–541; these read NVIV…EGPS, IVVN…IEGP, and NILT…GPSS. Residues N86, N239, N305, N349, N417, N453, and N687 are each glycosylated (N-linked (GlcNAc...) asparagine). Residues 589 to 884 enclose the GH10 domain; the sequence is SGASVRVRQI…NEAGKRFLAV (296 aa). E718 (proton donor) is an active-site residue. The active-site Nucleophile is the E819.

It belongs to the glycosyl hydrolase 10 (cellulase F) family. As to expression, predominantly expressed in vascular bundles, but not in vessel cells. Mostly expressed in stems, at lower levels in roots, and weakly in inflorescences and seedlings.

The protein resides in the secreted. The protein localises to the cell wall. It catalyses the reaction Endohydrolysis of (1-&gt;4)-beta-D-xylosidic linkages in xylans.. It functions in the pathway glycan degradation; xylan degradation. Its function is as follows. Binds to and hydrolyzes insoluble and soluble xylan substrates. Exhibits xylanase activity. This Arabidopsis thaliana (Mouse-ear cress) protein is Endo-1,4-beta-xylanase 1.